Reading from the N-terminus, the 471-residue chain is MKIKTRFAPSPTGYLHVGGARTALYSWLFARHHGGEFVLRIEDTDLERSTPEAIEAIMDGMNWLNLEWDEGPYFQTKRFDRYNAVIDEMLEAGTAYKCYCSKERLEQLREEQMAKGEKPRYDGRCRHSYEHHADDEPCVVRFANPQDGSVIFDDQIRGPIEFSNQELDDLIIRRTDGSPTYNFCVVVDDWDMEITHVIRGEDHINNTPRQINILKALNAPVPMYAHVSMINGDDGKKLSKRHGAVSVMQYRDDGYLPEALLNYLVRLGWSSGDQEIFTREEMIKLFSLGAVSKSASAFNTDKLLWLNHHYINTLEPEYVATHLQWHIEQENIDTRNGPQLAELVKLLGERCKTLKEMAQSCRYFYEDFSEFDADAAKKHLRPVARQPLEVVRDKLSAITDWSAENVHHAIQATADELEVGMGKVGMPLRVAVTGAGQSPALDVTVHAIGKTRSIERINKALGFIAERESQQ.

Residues proline 9–glycine 19 carry the 'HIGH' region motif. Zn(2+) is bound by residues cysteine 98, cysteine 100, cysteine 125, and histidine 127. The 'KMSKS' region signature appears at lysine 237–arginine 241. Position 240 (lysine 240) interacts with ATP.

It belongs to the class-I aminoacyl-tRNA synthetase family. Glutamate--tRNA ligase type 1 subfamily. In terms of assembly, monomer. Zn(2+) serves as cofactor.

Its subcellular location is the cytoplasm. The catalysed reaction is tRNA(Glu) + L-glutamate + ATP = L-glutamyl-tRNA(Glu) + AMP + diphosphate. Its function is as follows. Catalyzes the attachment of glutamate to tRNA(Glu) in a two-step reaction: glutamate is first activated by ATP to form Glu-AMP and then transferred to the acceptor end of tRNA(Glu). The protein is Glutamate--tRNA ligase of Salmonella gallinarum (strain 287/91 / NCTC 13346).